The chain runs to 331 residues: Cathepsin S (331 aa).

The first 16 residues, 1 to 16, serve as a signal peptide directing secretion; it reads MNWLVWALLLCSSAMA. A propeptide spans 17-114 (activation peptide); sequence HVHRDPTLDH…VTYKSDPNQK (98 aa). N-linked (GlcNAc...) asparagine glycosylation occurs at Asn104. Cystine bridges form between Cys126-Cys224, Cys136-Cys180, Cys170-Cys213, and Cys272-Cys320. The active site involves Cys139. Residues His278 and Asn298 contribute to the active site.

This sequence belongs to the peptidase C1 family. Monomer.

Its subcellular location is the lysosome. The protein localises to the secreted. The protein resides in the cytoplasmic vesicle. It is found in the phagosome. The enzyme catalyses Similar to cathepsin L, but with much less activity on Z-Phe-Arg-|-NHMec, and more activity on the Z-Val-Val-Arg-|-Xaa compound.. Thiol protease. Key protease responsible for the removal of the invariant chain from MHC class II molecules and MHC class II antigen presentation. The bond-specificity of this proteinase is in part similar to the specificities of cathepsin L. This chain is Cathepsin S (CTSS), found in Bos taurus (Bovine).